A 193-amino-acid polypeptide reads, in one-letter code: Xanthine phosphoribosyltransferase (193 aa).

Xanthine contacts are provided by Leu20 and Thr27. Residue 128–132 coordinates 5-phospho-alpha-D-ribose 1-diphosphate; the sequence is ANGQA. Xanthine is bound at residue Lys156.

The protein belongs to the purine/pyrimidine phosphoribosyltransferase family. Xpt subfamily. In terms of assembly, homodimer.

The protein localises to the cytoplasm. The enzyme catalyses XMP + diphosphate = xanthine + 5-phospho-alpha-D-ribose 1-diphosphate. The protein operates within purine metabolism; XMP biosynthesis via salvage pathway; XMP from xanthine: step 1/1. Its function is as follows. Converts the preformed base xanthine, a product of nucleic acid breakdown, to xanthosine 5'-monophosphate (XMP), so it can be reused for RNA or DNA synthesis. In Streptococcus pneumoniae serotype 2 (strain D39 / NCTC 7466), this protein is Xanthine phosphoribosyltransferase.